The primary structure comprises 335 residues: Phosphate acyltransferase (335 aa).

The protein belongs to the PlsX family. As to quaternary structure, homodimer. Probably interacts with PlsY.

The protein resides in the cytoplasm. The catalysed reaction is a fatty acyl-[ACP] + phosphate = an acyl phosphate + holo-[ACP]. The protein operates within lipid metabolism; phospholipid metabolism. In terms of biological role, catalyzes the reversible formation of acyl-phosphate (acyl-PO(4)) from acyl-[acyl-carrier-protein] (acyl-ACP). This enzyme utilizes acyl-ACP as fatty acyl donor, but not acyl-CoA. The chain is Phosphate acyltransferase from Streptococcus equi subsp. zooepidemicus (strain MGCS10565).